The primary structure comprises 227 residues: MICOS complex subunit MIC19 (227 aa).

Residue glycine 2 is the site of N-myristoyl glycine attachment. Serine 29 is modified (phosphoserine). The tract at residues 34–60 (DRMKETSPSGPKSQRYSGTYGASVSDE) is disordered. Residues 39-55 (TSPSGPKSQRYSGTYGA) are compositionally biased toward polar residues. At tyrosine 49 the chain carries Phosphotyrosine. A phosphoserine mark is found at serine 50, serine 56, and serine 58. Position 142 is an N6-acetyllysine (lysine 142). A CHCH domain is found at 180–222 (HPVCADLQAQILQCYRQNTQQTLSCSALASQYMRCVNQAKQST). 2 short sequence motifs (cx9C motif) span residues 183-193 (CADLQAQILQC) and 204-214 (CSALASQYMRC). 2 disulfides stabilise this stretch: cysteine 183–cysteine 214 and cysteine 193–cysteine 204.

The protein belongs to the MICOS complex subunit Mic19 family. Metazoan Mic19 subfamily. Component of the mitochondrial contact site and cristae organizing system (MICOS) complex, composed of at least MICOS10/MIC10, CHCHD3/MIC19, CHCHD6/MIC25, APOOL/MIC27, IMMT/MIC60, APOO/MIC23/MIC26 and MICOS13/MIC13. This complex was also known under the names MINOS or MitOS complex. The MICOS complex associates with mitochondrial outer membrane proteins SAMM50, MTX1 and MTX2 (together described as components of the mitochondrial outer membrane sorting assembly machinery (SAM) complex) and DNAJC11, mitochondrial inner membrane protein TMEM11 and with HSPA9. The MICOS and SAM complexes together with DNAJC11 are part of a large protein complex spanning both membranes termed the mitochondrial intermembrane space bridging (MIB) complex. Interacts with HSPA1A/HSPA1B and OPA1, preferentially with the soluble OPA1 form. Interacts with IMMT/MIC60.

The protein localises to the mitochondrion inner membrane. The protein resides in the cytoplasm. Its subcellular location is the nucleus. It localises to the mitochondrion. Its function is as follows. Component of the MICOS complex, a large protein complex of the mitochondrial inner membrane that plays crucial roles in the maintenance of crista junctions, inner membrane architecture, and formation of contact sites to the outer membrane. Has also been shown to function as a transcription factor which binds to the BAG1 promoter and represses BAG1 transcription. Plays an important role in the maintenance of the MICOS complex stability and the mitochondrial cristae morphology. The protein is MICOS complex subunit MIC19 (CHCHD3) of Bos taurus (Bovine).